The following is a 202-amino-acid chain: MSRYRGAVVRIIRRLGELPGLTRKTTRRNSRPGQHGDQPRKPSEYAIRLEEKQKLRFNYGLTEKQLLRYVKDAKRIKGSTGEALLQLLEMRLDNIVFRLGMAPTIPAARQLVNHGHICVNAKRVSIPSYQCQTTDVISVRNNARSKQLVENYLSFPGLANIPSHLEIDKEKLVGKVNGIIERDWVALQLNELLIVEYYSRKG.

The segment at 20–43 (GLTRKTTRRNSRPGQHGDQPRKPS) is disordered. In terms of domain architecture, S4 RNA-binding spans 90–152 (MRLDNIVFRL…ARSKQLVENY (63 aa)).

The protein belongs to the universal ribosomal protein uS4 family. As to quaternary structure, part of the 30S ribosomal subunit. Contacts protein S5. The interaction surface between S4 and S5 is involved in control of translational fidelity.

It localises to the plastid. The protein resides in the chloroplast. Its function is as follows. One of the primary rRNA binding proteins, it binds directly to 16S rRNA where it nucleates assembly of the body of the 30S subunit. In terms of biological role, with S5 and S12 plays an important role in translational accuracy. In Rhodomonas salina (Cryptomonas salina), this protein is Small ribosomal subunit protein uS4c (rps4).